A 68-amino-acid polypeptide reads, in one-letter code: Amphipathic peptide VmCT1 (68 aa).

The N-terminal stretch at 1–23 (MKTQFVILIVAVVLLQLISHSEA) is a signal peptide. At Phe36 the chain carries Phenylalanine amide. Residues 40–68 (GLRNFDDLDDTFEPEMSEADLKYLQDLLR) constitute a propeptide that is removed on maturation.

The protein belongs to the non-disulfide-bridged peptide (NDBP) superfamily. Short antimicrobial peptide (group 4) family. As to expression, expressed by the venom gland.

The protein resides in the secreted. Its subcellular location is the target cell membrane. Cationic amphipathic peptide with antibacterial activities against both Gram-positive and Gram-negative bacteria. Also shows antifungal activities. Is mildly hemolytic against human erythrocytes. In addition, when tested in vitro on the parasite Trypanosoma cruzi (responsible of the Chagas disease), is able to reduce the number of the three forms (epimastigote, trypomastigote and amastigote). Also shows antiplasmodial and cytotoxic activity (tested on Plasmodium gallinaceum, and MCF-7 breast cancer cell line). The polypeptide is Amphipathic peptide VmCT1 (Vaejovis mexicanus smithi (Mexican scorpion)).